Reading from the N-terminus, the 198-residue chain is Probable GTP-binding protein EngB (198 aa).

Positions 21 to 195 (NIPEVCFVGR…YDALIRLLEV (175 aa)) constitute an EngB-type G domain. GTP-binding positions include 29–36 (GRSNVGKS), 56–60 (GKTRL), 75–78 (DAPG), 142–145 (TKLD), and 174–176 (VSN). Ser-36 and Thr-58 together coordinate Mg(2+).

Belongs to the TRAFAC class TrmE-Era-EngA-EngB-Septin-like GTPase superfamily. EngB GTPase family. It depends on Mg(2+) as a cofactor.

Functionally, necessary for normal cell division and for the maintenance of normal septation. The chain is Probable GTP-binding protein EngB from Mesoplasma florum (strain ATCC 33453 / NBRC 100688 / NCTC 11704 / L1) (Acholeplasma florum).